We begin with the raw amino-acid sequence, 736 residues long: Catalase-peroxidase 2 (736 aa).

A cross-link (tryptophyl-tyrosyl-methioninium (Trp-Tyr) (with M-253)) is located at residues 91–227 (WHSAGTYRMG…LAAVQMGLIY (137 aa)). The active-site Proton acceptor is His92. The segment at residues 227-253 (YVNPEGPDGNPDPVAAAYDIREVFGRM) is a cross-link (tryptophyl-tyrosyl-methioninium (Tyr-Met) (with W-91)). His268 provides a ligand contact to heme b.

It belongs to the peroxidase family. Peroxidase/catalase subfamily. Homodimer or homotetramer. The cofactor is heme b. Post-translationally, formation of the three residue Trp-Tyr-Met cross-link is important for the catalase, but not the peroxidase activity of the enzyme.

The catalysed reaction is H2O2 + AH2 = A + 2 H2O. The enzyme catalyses 2 H2O2 = O2 + 2 H2O. Functionally, bifunctional enzyme with both catalase and broad-spectrum peroxidase activity. Shows peroxidase specificity towards odianisidine, ABTS and pyrogallol, but methoxyphenol and 2-chloronaphthol are not peroxidized. This chain is Catalase-peroxidase 2, found in Burkholderia cenocepacia (strain ATCC BAA-245 / DSM 16553 / LMG 16656 / NCTC 13227 / J2315 / CF5610) (Burkholderia cepacia (strain J2315)).